The following is a 460-amino-acid chain: Ribosomal protein uS12 methylthiotransferase RimO (460 aa).

The region spanning 18–134 (MKIHITSLGC…VTSIVAEVLR (117 aa)) is the MTTase N-terminal domain. Residues cysteine 27, cysteine 63, cysteine 97, cysteine 171, cysteine 175, and cysteine 178 each contribute to the [4Fe-4S] cluster site. The Radical SAM core domain occupies 157-387 (STPFHYAYVK…MVLQQEISLS (231 aa)). The 67-residue stretch at 390 to 456 (QEWIGKTLEV…HYDLMGEAID (67 aa)) folds into the TRAM domain.

It belongs to the methylthiotransferase family. RimO subfamily. It depends on [4Fe-4S] cluster as a cofactor.

Its subcellular location is the cytoplasm. It catalyses the reaction L-aspartate(89)-[ribosomal protein uS12]-hydrogen + (sulfur carrier)-SH + AH2 + 2 S-adenosyl-L-methionine = 3-methylsulfanyl-L-aspartate(89)-[ribosomal protein uS12]-hydrogen + (sulfur carrier)-H + 5'-deoxyadenosine + L-methionine + A + S-adenosyl-L-homocysteine + 2 H(+). Functionally, catalyzes the methylthiolation of an aspartic acid residue of ribosomal protein uS12. This Heliobacterium modesticaldum (strain ATCC 51547 / Ice1) protein is Ribosomal protein uS12 methylthiotransferase RimO.